A 391-amino-acid chain; its full sequence is Succinate--CoA ligase [ADP-forming] subunit beta (391 aa).

The ATP-grasp domain maps to 9 to 248 (KDILRKFGVA…ISEEDPFEVE (240 aa)). ATP is bound by residues Lys50, 57-59 (GRG), Glu103, Met106, and Glu111. Asn203 and Asp217 together coordinate Mg(2+). Residues Asn268 and 325 to 327 (GIV) contribute to the substrate site.

The protein belongs to the succinate/malate CoA ligase beta subunit family. In terms of assembly, heterotetramer of two alpha and two beta subunits. It depends on Mg(2+) as a cofactor.

It carries out the reaction succinate + ATP + CoA = succinyl-CoA + ADP + phosphate. It catalyses the reaction GTP + succinate + CoA = succinyl-CoA + GDP + phosphate. The protein operates within carbohydrate metabolism; tricarboxylic acid cycle; succinate from succinyl-CoA (ligase route): step 1/1. Its function is as follows. Succinyl-CoA synthetase functions in the citric acid cycle (TCA), coupling the hydrolysis of succinyl-CoA to the synthesis of either ATP or GTP and thus represents the only step of substrate-level phosphorylation in the TCA. The beta subunit provides nucleotide specificity of the enzyme and binds the substrate succinate, while the binding sites for coenzyme A and phosphate are found in the alpha subunit. This chain is Succinate--CoA ligase [ADP-forming] subunit beta, found in Chlorobium luteolum (strain DSM 273 / BCRC 81028 / 2530) (Pelodictyon luteolum).